Reading from the N-terminus, the 219-residue chain is Uracil-DNA glycosylase (219 aa).

The active-site Proton acceptor is the Asp59.

It belongs to the uracil-DNA glycosylase (UDG) superfamily. UNG family.

It is found in the cytoplasm. The catalysed reaction is Hydrolyzes single-stranded DNA or mismatched double-stranded DNA and polynucleotides, releasing free uracil.. Functionally, excises uracil residues from the DNA which can arise as a result of misincorporation of dUMP residues by DNA polymerase or due to deamination of cytosine. The chain is Uracil-DNA glycosylase from Macrococcus caseolyticus (strain JCSC5402) (Macrococcoides caseolyticum).